The sequence spans 3901 residues: Nonribosomal peptide synthetase opaA (3901 aa).

Residues 248 to 641 (HNAQHHPSVV…HRKDNQIKIR (394 aa)) are adenylation 1. The Carrier 1 domain maps to 780–854 (LPVTANEIVV…DMATRLTRIK (75 aa)). Residue S815 is modified to O-(pantetheine 4'-phosphoryl)serine. The condensation 1 stretch occupies residues 891-1164 (DAYPCSALQE…IATVPIRINL (274 aa)). The interval 1328–1725 (QSHAQKTPKS…GRIGNQVKLR (398 aa)) is adenylation 2. A Carrier 2 domain is found at 1858 to 1936 (RTPLDTERDL…QIAAQAATRA (79 aa)). S1895 is modified (O-(pantetheine 4'-phosphoryl)serine). Residues 1953-2261 (KLTPIQQLFF…KDARRRLTRN (309 aa)) are epimerase. The segment at 2403 to 2826 (ENLYPCAPIQ…LVSTDHKRLL (424 aa)) is condensation 2. An adenylation 3 region spans residues 2846–3243 (QQHVRETPDA…GRKDSQIKIR (398 aa)). The 77-residue stretch at 3375–3451 (LPSTAGEQLL…ALAARSRSKD (77 aa)) folds into the Carrier 3 domain. Residue S3412 is modified to O-(pantetheine 4'-phosphoryl)serine. A condensation 3 region spans residues 3509–3837 (HHFSFAVEGK…EDLKTHFTLN (329 aa)).

This sequence belongs to the NRP synthetase family.

Its function is as follows. Nonribosomal peptide synthetase; part of the gene cluster that mediates the biosynthesis of oxepinamides, derivatives of anthranilyl-containing tripeptides that share an oxepin ring and a fused pyrimidinone moiety. The nonribosomal peptide synthetase (NRPS) opaA assembles the quinazolinone core with D-Phe incorporation. The first adenylation domain (A1) of opaA loads and activates anthranilic acid whereas the second A domain (A2) is for activating of L-Phe, which is then converted to D-form by the E domain. The third A domain (A3) is responsible for L-Ile activation and the terminal condensation domain C3 for cyclization and releasing the NRPS product protuboxepin K. The cytochrome P450 monooxygenase opaB then catalyzes alone the oxepin ring formation to convert protuboxepin K into protuboxepin A. The flavoenzyme opaC installs subsequently one hydroxyl group at the oxepin ring, accompanied by double bond migration, to form 15-epi-oxepinamide E. The epimerase opaE changes the D-Phe residue back to L-form, leading to oxepinamide E, which is further methylated at the hydroxyl group at C-12 by the O-methyltransferase OpaF to yield oxepinamide F. This Aspergillus ustus protein is Nonribosomal peptide synthetase opaA.